A 323-amino-acid polypeptide reads, in one-letter code: MESKSLRELWEETEKLKDSSSTDEKTRSEIVEGYEKCLKLVLQLRIFSSNEEVDEIKTSELRYLMIDYELAKCVEQWTKGDRLKAVQYAKTHYETFLSICDDYGLKPMQDEKPKTEADTRTLKIARYRMRQNLEKELKALSKDSETNEEQERKFWLTKLQIAVEDTLDSLPHIEMEIDLLKRAQAELMKSEDSPEKDEETLRREERKQKEGSSWRLDLNTRDKILDKNNRPLQPFTIVSDRNETRKNVFGFGYNLPTMTVDEYLDEEMKRGNIISQKDNPPKSDSDDEDDYEKLDAKTMKDRYWDEFKEANPRGSGNTMVNRG.

2 disordered regions span residues 185 to 214 (AELM…GSSW) and 271 to 294 (GNII…YEKL).

This sequence belongs to the IGBP1/TAP42 family.

This is an uncharacterized protein from Schizosaccharomyces pombe (strain 972 / ATCC 24843) (Fission yeast).